Here is a 156-residue protein sequence, read N- to C-terminus: MNLNATILGQAIAFVLFVLFCMKYVWPPLMAAIEKRQKEIADGLASAERAHKDLDLAKASATDQLKKAKAEAQVIIEQANKRRSQILDEAKAEAEQERTKIVAQAQAEIEAERKRAREELRKQVAILAVAGAEKIIERSVDEAANSDIVDKLVAEL.

The helical transmembrane segment at 11 to 31 threads the bilayer; that stretch reads AIAFVLFVLFCMKYVWPPLMA.

It belongs to the ATPase B chain family. F-type ATPases have 2 components, F(1) - the catalytic core - and F(0) - the membrane proton channel. F(1) has five subunits: alpha(3), beta(3), gamma(1), delta(1), epsilon(1). F(0) has three main subunits: a(1), b(2) and c(10-14). The alpha and beta chains form an alternating ring which encloses part of the gamma chain. F(1) is attached to F(0) by a central stalk formed by the gamma and epsilon chains, while a peripheral stalk is formed by the delta and b chains.

The protein resides in the cell inner membrane. Functionally, f(1)F(0) ATP synthase produces ATP from ADP in the presence of a proton or sodium gradient. F-type ATPases consist of two structural domains, F(1) containing the extramembraneous catalytic core and F(0) containing the membrane proton channel, linked together by a central stalk and a peripheral stalk. During catalysis, ATP synthesis in the catalytic domain of F(1) is coupled via a rotary mechanism of the central stalk subunits to proton translocation. Its function is as follows. Component of the F(0) channel, it forms part of the peripheral stalk, linking F(1) to F(0). The sequence is that of ATP synthase subunit b from Shigella boydii serotype 18 (strain CDC 3083-94 / BS512).